The sequence spans 32 residues: Fibrinolytic enzyme (32 aa).

The N-terminus is blocked.

Inhibited by phenylmethanesulfonyl fluoride (PMSF). Not inhibited by EDTA, EGTA, beta-mercaptoethanol, indoacetamide, benzamidine, aprotinin, pepstatin A and trypsin inhibitor. Functionally, plasmin-like serine protease. Has fibrinolytic and fibrinogenolytic but not plasminogenolytic activity. Cleaves after Arg and Lys residues. In Hediste japonica (Polychaete worm), this protein is Fibrinolytic enzyme.